Reading from the N-terminus, the 929-residue chain is Protocadherin gamma-B7 (929 aa).

The N-terminal stretch at 1–30 (MGGSCAQRRRAGPRQVLFPLLLPLFYPTLC) is a signal peptide. Cadherin domains follow at residues 31 to 133 (EPIR…APQF), 134 to 242 (QKDE…PPVF), 243 to 347 (SQDV…SPEI), 348 to 452 (IITS…APVF), 453 to 562 (GQSA…APRV), and 570 to 675 (DGSA…LPDF). At 31–691 (EPIRYSIPEE…SDSQAEMQFY (661 aa)) the chain is on the extracellular side. N-linked (GlcNAc...) asparagine glycosylation is found at Asn-419 and Asn-545. The helical transmembrane segment at 692–712 (LVVALALISVLFLLAVILAIA) threads the bilayer. Topologically, residues 713–929 (LRLRQSFSPT…KKKSGKKEKK (217 aa)) are cytoplasmic. Disordered regions lie at residues 806-838 (QAPP…WPNN) and 899-929 (ATLT…KEKK). Polar residues predominate over residues 807 to 838 (APPNTDWRFSQAQRPGTSGSQNGDDTGTWPNN). Residues 919 to 929 (NKKKSGKKEKK) show a composition bias toward basic residues.

It localises to the cell membrane. In terms of biological role, potential calcium-dependent cell-adhesion protein. May be involved in the establishment and maintenance of specific neuronal connections in the brain. This chain is Protocadherin gamma-B7 (PCDHGB7), found in Pan troglodytes (Chimpanzee).